The sequence spans 117 residues: Holo-[acyl-carrier-protein] synthase (117 aa).

2 residues coordinate Mg(2+): Asp6 and Glu55.

It belongs to the P-Pant transferase superfamily. AcpS family. The cofactor is Mg(2+).

Its subcellular location is the cytoplasm. The catalysed reaction is apo-[ACP] + CoA = holo-[ACP] + adenosine 3',5'-bisphosphate + H(+). Functionally, transfers the 4'-phosphopantetheine moiety from coenzyme A to a Ser of acyl-carrier-protein. This chain is Holo-[acyl-carrier-protein] synthase, found in Chlorobaculum tepidum (strain ATCC 49652 / DSM 12025 / NBRC 103806 / TLS) (Chlorobium tepidum).